The chain runs to 168 residues: MVIAVYPGTFDPFTRGHEDLVRRASNIFDELVVGVAQSPNKRPFFALEERIHIAREVLGHYPNVRVEGFSGLLKDFVRKNNARVIVRGLRAVSDFEYEFQMAGMNRYLLPDVETMFLTPSDQYQFISGTFVREIAQLGGDVSKFVFPSVERWLVEKVGRRHAESDKTA.

T9 lines the substrate pocket. ATP contacts are provided by residues 9–10 (TF) and H17. The substrate site is built by K41, L73, and R87. Residues 88 to 90 (GLR), E98, and 123 to 129 (YQFISGT) contribute to the ATP site.

The protein belongs to the bacterial CoaD family. As to quaternary structure, homohexamer. Mg(2+) is required as a cofactor.

The protein resides in the cytoplasm. It carries out the reaction (R)-4'-phosphopantetheine + ATP + H(+) = 3'-dephospho-CoA + diphosphate. It participates in cofactor biosynthesis; coenzyme A biosynthesis; CoA from (R)-pantothenate: step 4/5. In terms of biological role, reversibly transfers an adenylyl group from ATP to 4'-phosphopantetheine, yielding dephospho-CoA (dPCoA) and pyrophosphate. In Ralstonia nicotianae (strain ATCC BAA-1114 / GMI1000) (Ralstonia solanacearum), this protein is Phosphopantetheine adenylyltransferase.